The primary structure comprises 406 residues: GTPase Obg (406 aa).

The 159-residue stretch at 1 to 159 folds into the Obg domain; it reads MKFVDEVSIH…RDLKLELKVL (159 aa). Positions 127-148 are disordered; sequence NTRFKSSTNRAPRQTTPGKPGE. The segment covering 129-143 has biased composition (polar residues); that stretch reads RFKSSTNRAPRQTTP. The region spanning 160-334 is the OBG-type G domain; that stretch reads ADVGLLGLPN…LSQDIMRYLD (175 aa). GTP is bound by residues 166 to 173, 191 to 195, 213 to 216, 283 to 286, and 315 to 317; these read GLPNAGKS, FTTLV, DIPG, NKMD, and SAL. Positions 173 and 193 each coordinate Mg(2+). Positions 378–406 are disordered; that stretch reads GLKNAGAADDDDFDDEEDDGDGPEIFYVP. Residues 385 to 399 are compositionally biased toward acidic residues; that stretch reads ADDDDFDDEEDDGDG.

Belongs to the TRAFAC class OBG-HflX-like GTPase superfamily. OBG GTPase family. Monomer. Mg(2+) serves as cofactor.

It is found in the cytoplasm. Functionally, an essential GTPase which binds GTP, GDP and possibly (p)ppGpp with moderate affinity, with high nucleotide exchange rates and a fairly low GTP hydrolysis rate. Plays a role in control of the cell cycle, stress response, ribosome biogenesis and in those bacteria that undergo differentiation, in morphogenesis control. The protein is GTPase Obg of Pseudomonas paraeruginosa (strain DSM 24068 / PA7) (Pseudomonas aeruginosa (strain PA7)).